Reading from the N-terminus, the 284-residue chain is uncharacterized protein (284 aa).

The chain crosses the membrane as a helical span at residues 9 to 28 (IILRWVVTLYIYGFILYQIT).

It localises to the membrane. This is an uncharacterized protein from Aquifex aeolicus (strain VF5).